The chain runs to 185 residues: Ribosome-recycling factor (185 aa).

The protein belongs to the RRF family.

The protein localises to the cytoplasm. Functionally, responsible for the release of ribosomes from messenger RNA at the termination of protein biosynthesis. May increase the efficiency of translation by recycling ribosomes from one round of translation to another. In Heliobacterium modesticaldum (strain ATCC 51547 / Ice1), this protein is Ribosome-recycling factor.